Reading from the N-terminus, the 265-residue chain is Taurine import ATP-binding protein TauB (265 aa).

The 230-residue stretch at 7-236 folds into the ABC transporter domain; it reads QNLNMIFKTP…MGIDGDLREI (230 aa). ATP is bound at residue 41 to 48; sequence GPSGCGKT.

The protein belongs to the ABC transporter superfamily. Taurine importer (TC 3.A.1.17.1) family. In terms of assembly, the complex is composed of two ATP-binding proteins (TauB), two transmembrane proteins (TauC) and a solute-binding protein (TauA).

The protein localises to the cell inner membrane. It carries out the reaction taurine(out) + ATP + H2O = taurine(in) + ADP + phosphate + H(+). Part of the ABC transporter complex TauABC involved in taurine import. Responsible for energy coupling to the transport system. The sequence is that of Taurine import ATP-binding protein TauB from Pelagibacter ubique (strain HTCC1062).